The sequence spans 60 residues: Large ribosomal subunit protein bL32 (60 aa).

It belongs to the bacterial ribosomal protein bL32 family.

The protein is Large ribosomal subunit protein bL32 of Streptococcus mutans serotype c (strain ATCC 700610 / UA159).